The sequence spans 441 residues: Acidic phosphoprotein (441 aa).

The or 24 signal peptide spans 1-15; it reads MKAISLGLISSIIFS. N-linked (GlcNAc...) asparagine glycosylation is found at N21 and N112. 18 consecutive repeat copies span residues 186–193, 194–201, 202–209, 210–217, 218–225, 226–233, 234–241, 242–249, 250–257, 258–265, 266–273, 274–281, 282–289, 290–297, 298–305, 306–313, 353–360, and 361–368. Positions 186-313 are 16 X 8 AA tandem repeats; the sequence is EEDPYLLQEE…SNEAGEGTAN (128 aa). The segment at 232 to 416 is disordered; that stretch reads LNEEDAGTTN…EKEKKKEKKV (185 aa). A compositionally biased stretch (low complexity) spans 238–247; the sequence is GTTNEAGEGT. Residues 248–273 are compositionally biased toward acidic residues; that stretch reads TNEEGEGAANEYDAETLNEYDADTLN. Over residues 294–306 the composition is skewed to polar residues; that stretch reads STTNEAGEGTSNE. The span at 312–332 shows a compositional bias: acidic residues; it reads ANDDEELDEEVASIFDDDEHA. Over residues 349–371 the composition is skewed to basic and acidic residues; it reads ENVKKGNENEGEQKGNENEGEQK. The interval 353 to 370 is 2 X 9 AA tandem repeats; that stretch reads KGNENEGEQKGNENEGEQ. Residues 372 to 415 show a composition bias toward basic residues; the sequence is GKKKKAKEKSKKKVKNKPTMTTKKKKKKEKKKKKKEKEKKKEKK.

The protein localises to the cell membrane. Functionally, during infection, this phosphoprotein probably modulates the structure of the red cell membrane to the advantage of the parasite, although its precise function is not known. The protein is Acidic phosphoprotein (PCEMA1) of Plasmodium chabaudi.